The primary structure comprises 100 residues: Urease subunit gamma (100 aa).

The protein belongs to the urease gamma subunit family. Heterotrimer of UreA (gamma), UreB (beta) and UreC (alpha) subunits. Three heterotrimers associate to form the active enzyme.

It is found in the cytoplasm. The catalysed reaction is urea + 2 H2O + H(+) = hydrogencarbonate + 2 NH4(+). The protein operates within nitrogen metabolism; urea degradation; CO(2) and NH(3) from urea (urease route): step 1/1. This chain is Urease subunit gamma, found in Acetivibrio thermocellus (strain ATCC 27405 / DSM 1237 / JCM 9322 / NBRC 103400 / NCIMB 10682 / NRRL B-4536 / VPI 7372) (Clostridium thermocellum).